Reading from the N-terminus, the 399-residue chain is UDP-galactopyranose mutase (399 aa).

Phe18, Glu38, Asn46, and Leu66 together coordinate FAD. Residues Phe157, Thr162, Trp166, and Tyr191 each coordinate UDP-alpha-D-galactose. 224-225 (DW) contacts FAD. Positions 282, 292, and 328 each coordinate UDP-alpha-D-galactose. Arg360 is a binding site for FAD. Tyr366 is a binding site for UDP-alpha-D-galactose. 367-369 (LDM) lines the FAD pocket.

Belongs to the UDP-galactopyranose/dTDP-fucopyranose mutase family. Homotetramer. FAD serves as cofactor.

It carries out the reaction UDP-alpha-D-galactose = UDP-alpha-D-galactofuranose. It participates in cell wall biogenesis; cell wall polysaccharide biosynthesis. Catalyzes the interconversion through a 2-keto intermediate of uridine diphosphogalactopyranose (UDP-GalP) into uridine diphosphogalactofuranose (UDP-GalF) which is a key building block for cell wall construction in Mycobacterium tuberculosis. The chain is UDP-galactopyranose mutase (glf) from Mycobacterium tuberculosis (strain CDC 1551 / Oshkosh).